The following is a 329-amino-acid chain: Malate dehydrogenase (329 aa).

NAD(+) is bound at residue 12–18 (GAAGQIG). Arginine 93 and arginine 99 together coordinate substrate. NAD(+) contacts are provided by residues asparagine 106, glutamine 113, and 130–132 (TGN). Substrate contacts are provided by asparagine 132 and arginine 163. Histidine 188 acts as the Proton acceptor in catalysis.

It belongs to the LDH/MDH superfamily. MDH type 2 family.

It carries out the reaction (S)-malate + NAD(+) = oxaloacetate + NADH + H(+). Functionally, catalyzes the reversible oxidation of malate to oxaloacetate. The sequence is that of Malate dehydrogenase from Mycobacterium bovis (strain ATCC BAA-935 / AF2122/97).